The following is a 63-amino-acid chain: Ferredoxin (63 aa).

The 29-residue stretch at 3-31 (WKVSVDVDTCIGDAICASLCPDVFEMGDD) folds into the 4Fe-4S ferredoxin-type domain. The [4Fe-4S] cluster site is built by cysteine 12, aspartate 15, and cysteine 18. Cysteines 22 and 45 form a disulfide. Position 53 (cysteine 53) interacts with [4Fe-4S] cluster.

[4Fe-4S] cluster serves as cofactor. The cofactor is [3Fe-4S] cluster.

Ferredoxins are iron-sulfur proteins that transfer electrons in a wide variety of metabolic reactions. This Thermococcus kodakarensis (strain ATCC BAA-918 / JCM 12380 / KOD1) (Pyrococcus kodakaraensis (strain KOD1)) protein is Ferredoxin (fdxA).